The primary structure comprises 523 residues: Glutamate--cysteine ligase, chloroplastic (523 aa).

Cys187 and Cys407 are disulfide-bonded.

It belongs to the carboxylate-amine ligase family. Glutamate--cysteine ligase type 2 subfamily. Homodimer or monomer when oxidized or reduced, respectively. Post-translationally, the Cys-187-Cys-407 disulfide bridge is known to modulate the enzyme activity according to the redox status. The oxidized form constitutes the active enzyme.

The protein localises to the plastid. Its subcellular location is the chloroplast. The catalysed reaction is L-cysteine + L-glutamate + ATP = gamma-L-glutamyl-L-cysteine + ADP + phosphate + H(+). It functions in the pathway sulfur metabolism; glutathione biosynthesis; glutathione from L-cysteine and L-glutamate: step 1/2. The polypeptide is Glutamate--cysteine ligase, chloroplastic (GSH1) (Solanum lycopersicum (Tomato)).